A 403-amino-acid chain; its full sequence is Arginine biosynthesis bifunctional protein ArgJ (403 aa).

Positions 149, 175, 186, 272, 398, and 403 each coordinate substrate. The active-site Nucleophile is Thr186.

It belongs to the ArgJ family. Heterotetramer of two alpha and two beta chains.

The protein localises to the cytoplasm. The enzyme catalyses N(2)-acetyl-L-ornithine + L-glutamate = N-acetyl-L-glutamate + L-ornithine. The catalysed reaction is L-glutamate + acetyl-CoA = N-acetyl-L-glutamate + CoA + H(+). It participates in amino-acid biosynthesis; L-arginine biosynthesis; L-ornithine and N-acetyl-L-glutamate from L-glutamate and N(2)-acetyl-L-ornithine (cyclic): step 1/1. The protein operates within amino-acid biosynthesis; L-arginine biosynthesis; N(2)-acetyl-L-ornithine from L-glutamate: step 1/4. In terms of biological role, catalyzes two activities which are involved in the cyclic version of arginine biosynthesis: the synthesis of N-acetylglutamate from glutamate and acetyl-CoA as the acetyl donor, and of ornithine by transacetylation between N(2)-acetylornithine and glutamate. The protein is Arginine biosynthesis bifunctional protein ArgJ of Caldanaerobacter subterraneus subsp. tengcongensis (strain DSM 15242 / JCM 11007 / NBRC 100824 / MB4) (Thermoanaerobacter tengcongensis).